The sequence spans 190 residues: Vascular endothelial growth factor A (190 aa).

Positions 1–26 (MNFLLSWVHWSLALLLYLHHAKWSQA) are cleaved as a signal peptide. 3 cysteine pairs are disulfide-bonded: C51-C93, C82-C127, and C86-C129. An N-linked (GlcNAc...) asparagine glycan is attached at N100.

This sequence belongs to the PDGF/VEGF growth factor family. Homodimer; disulfide-linked. Also found as heterodimer with PGF. Interacts with NRP1. Interacts with BSG. Interacts with CD82; this interaction inhibits VEGFA-mediated signaling pathway.

The protein localises to the secreted. Its function is as follows. Growth factor active in angiogenesis, vasculogenesis and endothelial cell growth. Induces endothelial cell proliferation, promotes cell migration, inhibits apoptosis and induces permeabilization of blood vessels. Binds to the FLT1/VEGFR1 and KDR/VEGFR2 receptors, heparan sulfate and heparin. Binding to NRP1 receptor initiates a signaling pathway needed for motor neuron axon guidance and cell body migration, including for the caudal migration of facial motor neurons from rhombomere 4 to rhombomere 6 during embryonic development. Also binds the DEAR/FBXW7-AS1 receptor. The sequence is that of Vascular endothelial growth factor A (VEGFA) from Sus scrofa (Pig).